Reading from the N-terminus, the 396-residue chain is Tryptophan synthase beta chain (396 aa).

At lysine 86 the chain carries N6-(pyridoxal phosphate)lysine.

Belongs to the TrpB family. As to quaternary structure, tetramer of two alpha and two beta chains. The cofactor is pyridoxal 5'-phosphate.

It catalyses the reaction (1S,2R)-1-C-(indol-3-yl)glycerol 3-phosphate + L-serine = D-glyceraldehyde 3-phosphate + L-tryptophan + H2O. It functions in the pathway amino-acid biosynthesis; L-tryptophan biosynthesis; L-tryptophan from chorismate: step 5/5. The beta subunit is responsible for the synthesis of L-tryptophan from indole and L-serine. The chain is Tryptophan synthase beta chain from Aliivibrio fischeri (strain MJ11) (Vibrio fischeri).